The chain runs to 61 residues: MAKKSLIVKQQRKPKYRTRAYNRCKLCGRPHAYMRKFGICRLCFRDLAYKGQIPGVRKASW.

Zn(2+)-binding residues include cysteine 24, cysteine 27, cysteine 40, and cysteine 43.

The protein belongs to the universal ribosomal protein uS14 family. Zinc-binding uS14 subfamily. In terms of assembly, part of the 30S ribosomal subunit. Contacts proteins S3 and S10. It depends on Zn(2+) as a cofactor.

Functionally, binds 16S rRNA, required for the assembly of 30S particles and may also be responsible for determining the conformation of the 16S rRNA at the A site. This chain is Small ribosomal subunit protein uS14, found in Acetivibrio thermocellus (strain ATCC 27405 / DSM 1237 / JCM 9322 / NBRC 103400 / NCIMB 10682 / NRRL B-4536 / VPI 7372) (Clostridium thermocellum).